The following is a 339-amino-acid chain: Phosphate acyltransferase (339 aa).

Belongs to the PlsX family. Homodimer. Probably interacts with PlsY.

It localises to the cytoplasm. It catalyses the reaction a fatty acyl-[ACP] + phosphate = an acyl phosphate + holo-[ACP]. It participates in lipid metabolism; phospholipid metabolism. Its function is as follows. Catalyzes the reversible formation of acyl-phosphate (acyl-PO(4)) from acyl-[acyl-carrier-protein] (acyl-ACP). This enzyme utilizes acyl-ACP as fatty acyl donor, but not acyl-CoA. The protein is Phosphate acyltransferase of Helicobacter pylori (strain Shi470).